The chain runs to 189 residues: Small ribosomal subunit protein uS5 (189 aa).

One can recognise an S5 DRBM domain in the interval 22–85; the sequence is LIDKLVTINR…ERAKRGMIRV (64 aa). The disordered stretch occupies residues 164-189; that stretch reads SVASRRGKKVADLFGPKREKEAPADV. Over residues 172-189 the composition is skewed to basic and acidic residues; that stretch reads KVADLFGPKREKEAPADV.

This sequence belongs to the universal ribosomal protein uS5 family. Part of the 30S ribosomal subunit. Contacts proteins S4 and S8.

Its function is as follows. With S4 and S12 plays an important role in translational accuracy. In terms of biological role, located at the back of the 30S subunit body where it stabilizes the conformation of the head with respect to the body. The polypeptide is Small ribosomal subunit protein uS5 (Acidiphilium cryptum (strain JF-5)).